A 550-amino-acid polypeptide reads, in one-letter code: Dihydroxy-acid dehydratase (550 aa).

Asp-78 provides a ligand contact to Mg(2+). [2Fe-2S] cluster is bound at residue Cys-119. Residues Asp-120 and Lys-121 each coordinate Mg(2+). Position 121 is an N6-carboxylysine (Lys-121). Position 191 (Cys-191) interacts with [2Fe-2S] cluster. Residue Glu-440 coordinates Mg(2+). Catalysis depends on Ser-466, which acts as the Proton acceptor.

This sequence belongs to the IlvD/Edd family. Homodimer. Requires [2Fe-2S] cluster as cofactor. Mg(2+) is required as a cofactor.

The catalysed reaction is (2R)-2,3-dihydroxy-3-methylbutanoate = 3-methyl-2-oxobutanoate + H2O. It catalyses the reaction (2R,3R)-2,3-dihydroxy-3-methylpentanoate = (S)-3-methyl-2-oxopentanoate + H2O. Its pathway is amino-acid biosynthesis; L-isoleucine biosynthesis; L-isoleucine from 2-oxobutanoate: step 3/4. The protein operates within amino-acid biosynthesis; L-valine biosynthesis; L-valine from pyruvate: step 3/4. Functionally, functions in the biosynthesis of branched-chain amino acids. Catalyzes the dehydration of (2R,3R)-2,3-dihydroxy-3-methylpentanoate (2,3-dihydroxy-3-methylvalerate) into 2-oxo-3-methylpentanoate (2-oxo-3-methylvalerate) and of (2R)-2,3-dihydroxy-3-methylbutanoate (2,3-dihydroxyisovalerate) into 2-oxo-3-methylbutanoate (2-oxoisovalerate), the penultimate precursor to L-isoleucine and L-valine, respectively. The polypeptide is Dihydroxy-acid dehydratase (Methanococcus vannielii (strain ATCC 35089 / DSM 1224 / JCM 13029 / OCM 148 / SB)).